The chain runs to 186 residues: uncharacterized protein (186 aa).

The first 21 residues, 1–21 (MKFFLGSALFLILTFINLVRA), serve as a signal peptide directing secretion. At 22 to 142 (EFEFITPAED…AFSVNPIDKK (121 aa)) the chain is on the extracellular side. N-linked (GlcNAc...) asparagine glycans are attached at residues Asn62, Asn75, Asn93, and Asn104. Residues 143–163 (LAIGLSVGLSCCILIVLFLHF) form a helical membrane-spanning segment. Residues 164–186 (ATRRERRILKNEKELEMSSYRKH) are Cytoplasmic-facing.

It is found in the membrane. This is an uncharacterized protein from Schizosaccharomyces pombe (strain 972 / ATCC 24843) (Fission yeast).